The following is a 231-amino-acid chain: Lipoprotein-releasing system ATP-binding protein LolD (231 aa).

Residues 6-231 (LQVQAVSKSY…YLQAVAEHAQ (226 aa)) form the ABC transporter domain. 42–49 (GTSGSGKS) is an ATP binding site.

The protein belongs to the ABC transporter superfamily. Lipoprotein translocase (TC 3.A.1.125) family. In terms of assembly, the complex is composed of two ATP-binding proteins (LolD) and two transmembrane proteins (LolC and LolE).

The protein localises to the cell inner membrane. Part of the ABC transporter complex LolCDE involved in the translocation of mature outer membrane-directed lipoproteins, from the inner membrane to the periplasmic chaperone, LolA. Responsible for the formation of the LolA-lipoprotein complex in an ATP-dependent manner. This is Lipoprotein-releasing system ATP-binding protein LolD from Shewanella sp. (strain MR-7).